A 492-amino-acid polypeptide reads, in one-letter code: Putative transporter SVOPL (492 aa).

10 consecutive transmembrane segments (helical) span residues 48–68 (IALF…IMLI), 86–106 (VALV…LFGL), 121–141 (FLWG…IWFV), 179–199 (VFWL…IPTI), 203–223 (WLIR…KFIP), 281–301 (TLQI…VILA), 348–368 (IIST…INFL), 383–403 (LFFL…FLFM), 429–449 (ALGM…APFI), and 458–478 (ILGA…SAFT).

It belongs to the major facilitator superfamily.

It localises to the membrane. This chain is Putative transporter SVOPL (SVOPL), found in Homo sapiens (Human).